A 296-amino-acid polypeptide reads, in one-letter code: MTTITPIMVKELRERTGAAVMACKKALQETNGDMEAAIDLLRKAGDAKAAKRAGKTAAEGVIVIAISKDQKKGFMAEVNSETDFVARDTNFMAFASKVAERGLAEGVSDVAATLALPIEPNSSSTIEDERKALVNRIGENIQIRRVASLSSDGVVGHYSHGGRIGVLLALDVPNPELAKGLAMHVAAFNPQAVSANQVSTEFVEKEKEIFLARAQETGKPANIIEKMVKGQVEKLLKEVSLEGQSFVKDPEKLVGDLLKAEKAKVLAFLRFEVGEGVEKESQNFADEVMAQVQGNR.

The involved in Mg(2+) ion dislocation from EF-Tu stretch occupies residues Thr-82–Val-85.

The protein belongs to the EF-Ts family.

The protein localises to the cytoplasm. Its function is as follows. Associates with the EF-Tu.GDP complex and induces the exchange of GDP to GTP. It remains bound to the aminoacyl-tRNA.EF-Tu.GTP complex up to the GTP hydrolysis stage on the ribosome. This Coxiella burnetii (strain CbuG_Q212) (Coxiella burnetii (strain Q212)) protein is Elongation factor Ts.